Here is a 128-residue protein sequence, read N- to C-terminus: Ribosome-binding factor A (128 aa).

This sequence belongs to the RbfA family. As to quaternary structure, monomer. Binds 30S ribosomal subunits, but not 50S ribosomal subunits or 70S ribosomes.

It is found in the cytoplasm. Its function is as follows. One of several proteins that assist in the late maturation steps of the functional core of the 30S ribosomal subunit. Associates with free 30S ribosomal subunits (but not with 30S subunits that are part of 70S ribosomes or polysomes). Required for efficient processing of 16S rRNA. May interact with the 5'-terminal helix region of 16S rRNA. The polypeptide is Ribosome-binding factor A (Acidithiobacillus ferrooxidans (strain ATCC 23270 / DSM 14882 / CIP 104768 / NCIMB 8455) (Ferrobacillus ferrooxidans (strain ATCC 23270))).